Here is a 212-residue protein sequence, read N- to C-terminus: uncharacterized protein (212 aa).

This is an uncharacterized protein from Saccharolobus islandicus (Sulfolobus islandicus).